The sequence spans 91 residues: uncharacterized protein (91 aa).

Positions 1–21 are cleaved as a signal peptide; it reads MKQLLASPSLQLVTYPASATA.

This sequence belongs to the BhsA/McbA family.

Its subcellular location is the periplasm. This is an uncharacterized protein from Escherichia coli O157:H7.